The chain runs to 60 residues: Large ribosomal subunit protein bL33 (60 aa).

It belongs to the bacterial ribosomal protein bL33 family.

This chain is Large ribosomal subunit protein bL33, found in Pelodictyon phaeoclathratiforme (strain DSM 5477 / BU-1).